The sequence spans 243 residues: Ubiquinone/menaquinone biosynthesis C-methyltransferase UbiE (243 aa).

Residues T69, D90, and D116–A117 contribute to the S-adenosyl-L-methionine site.

It belongs to the class I-like SAM-binding methyltransferase superfamily. MenG/UbiE family.

It carries out the reaction a 2-demethylmenaquinol + S-adenosyl-L-methionine = a menaquinol + S-adenosyl-L-homocysteine + H(+). The enzyme catalyses a 2-methoxy-6-(all-trans-polyprenyl)benzene-1,4-diol + S-adenosyl-L-methionine = a 5-methoxy-2-methyl-3-(all-trans-polyprenyl)benzene-1,4-diol + S-adenosyl-L-homocysteine + H(+). It functions in the pathway quinol/quinone metabolism; menaquinone biosynthesis; menaquinol from 1,4-dihydroxy-2-naphthoate: step 2/2. Its pathway is cofactor biosynthesis; ubiquinone biosynthesis. Methyltransferase required for the conversion of demethylmenaquinol (DMKH2) to menaquinol (MKH2) and the conversion of 2-polyprenyl-6-methoxy-1,4-benzoquinol (DDMQH2) to 2-polyprenyl-3-methyl-6-methoxy-1,4-benzoquinol (DMQH2). The chain is Ubiquinone/menaquinone biosynthesis C-methyltransferase UbiE from Paraburkholderia xenovorans (strain LB400).